The sequence spans 173 residues: Succinate dehydrogenase assembly factor 3, mitochondrial (173 aa).

A mitochondrion-targeting transit peptide spans Met-1–Asp-59. Positions Phe-149–Glu-173 are disordered. The segment covering Glu-152–Ala-162 has biased composition (basic and acidic residues).

This sequence belongs to the complex I LYR family. SDHAF3 subfamily. As to quaternary structure, interacts with the iron-sulfur protein subunit within the SDH catalytic dimer.

Its subcellular location is the mitochondrion matrix. Its function is as follows. Plays an essential role in the assembly of succinate dehydrogenase (SDH), an enzyme complex (also referred to as respiratory complex II) that is a component of both the tricarboxylic acid (TCA) cycle and the mitochondrial electron transport chain, and which couples the oxidation of succinate to fumarate with the reduction of ubiquinone (coenzyme Q) to ubiquinol. Promotes maturation of the iron-sulfur protein subunit of the SDH catalytic dimer, protecting it from the deleterious effects of oxidants. May act together with SDHAF1. The chain is Succinate dehydrogenase assembly factor 3, mitochondrial from Mycosarcoma maydis (Corn smut fungus).